A 360-amino-acid polypeptide reads, in one-letter code: S-adenosylmethionine:tRNA ribosyltransferase-isomerase (360 aa).

It belongs to the QueA family. As to quaternary structure, monomer.

The protein localises to the cytoplasm. It catalyses the reaction 7-aminomethyl-7-carbaguanosine(34) in tRNA + S-adenosyl-L-methionine = epoxyqueuosine(34) in tRNA + adenine + L-methionine + 2 H(+). It participates in tRNA modification; tRNA-queuosine biosynthesis. In terms of biological role, transfers and isomerizes the ribose moiety from AdoMet to the 7-aminomethyl group of 7-deazaguanine (preQ1-tRNA) to give epoxyqueuosine (oQ-tRNA). The sequence is that of S-adenosylmethionine:tRNA ribosyltransferase-isomerase from Sinorhizobium medicae (strain WSM419) (Ensifer medicae).